The primary structure comprises 220 residues: uncharacterized protein (220 aa).

This is an uncharacterized protein from Methanocaldococcus jannaschii (strain ATCC 43067 / DSM 2661 / JAL-1 / JCM 10045 / NBRC 100440) (Methanococcus jannaschii).